The sequence spans 246 residues: Adenosylcobinamide-GDP ribazoletransferase (246 aa).

Helical transmembrane passes span 34-54 (IVTFPLVGLLLGAIAGAVALL), 59-79 (CGVPLAALFGVLALALLTGGF), 113-133 (GGLALIFVLVAKVLVIGELLL), 138-158 (PIAALAAACAVGRGMAVLLMY), 171-191 (LFIGKVSLQQTLVTMAMGVAL), and 194-214 (VLLGLQGLRAALITLVLIWGL).

Belongs to the CobS family. It depends on Mg(2+) as a cofactor.

The protein localises to the cell inner membrane. The catalysed reaction is alpha-ribazole + adenosylcob(III)inamide-GDP = adenosylcob(III)alamin + GMP + H(+). The enzyme catalyses alpha-ribazole 5'-phosphate + adenosylcob(III)inamide-GDP = adenosylcob(III)alamin 5'-phosphate + GMP + H(+). It functions in the pathway cofactor biosynthesis; adenosylcobalamin biosynthesis; adenosylcobalamin from cob(II)yrinate a,c-diamide: step 7/7. Joins adenosylcobinamide-GDP and alpha-ribazole to generate adenosylcobalamin (Ado-cobalamin). Also synthesizes adenosylcobalamin 5'-phosphate from adenosylcobinamide-GDP and alpha-ribazole 5'-phosphate. In Klebsiella pneumoniae (strain 342), this protein is Adenosylcobinamide-GDP ribazoletransferase.